Consider the following 446-residue polypeptide: N-succinylarginine dihydrolase (446 aa).

Substrate-binding positions include 19–28, Asn-110, and 137–138; these read AGLSFGNVAS and HR. Glu-174 is an active-site residue. Arg-213 is a substrate binding site. Residue His-249 is part of the active site. Asp-251 and Asn-364 together coordinate substrate. Cys-370 acts as the Nucleophile in catalysis.

It belongs to the succinylarginine dihydrolase family. Homodimer.

It catalyses the reaction N(2)-succinyl-L-arginine + 2 H2O + 2 H(+) = N(2)-succinyl-L-ornithine + 2 NH4(+) + CO2. It participates in amino-acid degradation; L-arginine degradation via AST pathway; L-glutamate and succinate from L-arginine: step 2/5. Its function is as follows. Catalyzes the hydrolysis of N(2)-succinylarginine into N(2)-succinylornithine, ammonia and CO(2). This Burkholderia ambifaria (strain ATCC BAA-244 / DSM 16087 / CCUG 44356 / LMG 19182 / AMMD) (Burkholderia cepacia (strain AMMD)) protein is N-succinylarginine dihydrolase.